We begin with the raw amino-acid sequence, 229 residues long: 2-C-methyl-D-erythritol 4-phosphate cytidylyltransferase (229 aa).

The protein belongs to the IspD/TarI cytidylyltransferase family. IspD subfamily.

The catalysed reaction is 2-C-methyl-D-erythritol 4-phosphate + CTP + H(+) = 4-CDP-2-C-methyl-D-erythritol + diphosphate. It participates in isoprenoid biosynthesis; isopentenyl diphosphate biosynthesis via DXP pathway; isopentenyl diphosphate from 1-deoxy-D-xylulose 5-phosphate: step 2/6. Catalyzes the formation of 4-diphosphocytidyl-2-C-methyl-D-erythritol from CTP and 2-C-methyl-D-erythritol 4-phosphate (MEP). This Clostridium botulinum (strain ATCC 19397 / Type A) protein is 2-C-methyl-D-erythritol 4-phosphate cytidylyltransferase.